The following is a 356-amino-acid chain: Glucose 1-dehydrogenase (356 aa).

Positions 1 to 26 are disordered; it reads MDAIVVSKADRTPRLVDRPRPDPTPG. A compositionally biased stretch (basic and acidic residues) spans 8–21; sequence KADRTPRLVDRPRP. Zn(2+) is bound at residue D38. A substrate-binding site is contributed by T40. Zn(2+)-binding residues include H63 and E64. The disordered stretch occupies residues 86-107; it reads TVRRPRGDPTPQFDRGQPDMAA. Residues E113 and E149 each contribute to the substrate site. Position 149 (E149) interacts with Zn(2+). NADP(+) is bound by residues 180–183, 205–206, 270–272, and 300–302; these read NGSL, RR, LGV, and SVN. N302 serves as a coordination point for substrate.

Belongs to the zinc-containing alcohol dehydrogenase family. Glucose 1-dehydrogenase subfamily. The cofactor is Zn(2+).

The enzyme catalyses D-glucose + NAD(+) = D-glucono-1,5-lactone + NADH + H(+). It catalyses the reaction D-glucose + NADP(+) = D-glucono-1,5-lactone + NADPH + H(+). Catalyzes the NAD(P)(+)-dependent oxidation of D-glucose to D-gluconate via gluconolactone. Can utilize both NAD(+) and NADP(+) as electron acceptor. Is involved in the degradation of glucose through a modified Entner-Doudoroff pathway. The chain is Glucose 1-dehydrogenase from Halobacterium salinarum (strain ATCC 700922 / JCM 11081 / NRC-1) (Halobacterium halobium).